A 100-amino-acid chain; its full sequence is uncharacterized protein (100 aa).

Belongs to the csb family.

This is an uncharacterized protein from Dictyostelium discoideum (Social amoeba).